A 93-amino-acid chain; its full sequence is MTDFHRIKRLPPYVFEQVNRIKAAARARGADIIDLGMGNPDLDAPRHVIEKLVETAGKPRTDRYSASKGIAGLRRAQAGYYQRRFGVSLNPDT.

It belongs to the class-I pyridoxal-phosphate-dependent aminotransferase family. As to quaternary structure, homodimer. Pyridoxal 5'-phosphate is required as a cofactor.

It is found in the cytoplasm. It carries out the reaction L-aspartate + 2-oxoglutarate = oxaloacetate + L-glutamate. The polypeptide is Putative aspartate aminotransferase (Methylorubrum extorquens (Methylobacterium dichloromethanicum)).